Consider the following 393-residue polypeptide: Protein shisa-9B (393 aa).

Positions 1–20 are cleaved as a signal peptide; it reads MKSTGLLLGYFLMKVLVCDA. Over 21-131 the chain is Extracellular; sequence EGEPGKSLDG…MDQHDPTKDK (111 aa). The segment at 28-52 is disordered; that stretch reads LDGAVTASGSNDSRDGENGLSETPH. Asn-38 carries N-linked (GlcNAc...) asparagine glycosylation. The helical transmembrane segment at 132–152 threads the bilayer; it reads TNLIVYIICGVVAIMALVGIF. The Cytoplasmic segment spans residues 153-393; the sequence is TKLGLEKAHR…VTNSKTEVTV (241 aa). Residues 307–340 are disordered; it reads QKQNGHKSKSTKVHSSHPLAYGSNTIANPGRMSS. Residues 310–321 are compositionally biased toward basic residues; it reads NGHKSKSTKVHS.

Belongs to the shisa family. SHISA9 subfamily. As to quaternary structure, component of some AMPA receptors (ionotropic glutamate receptors) complex.

The protein localises to the cell projection. It localises to the dendritic spine membrane. It is found in the synapse. In terms of biological role, regulator of short-term neuronal synaptic plasticity in the dentate gyrus. Associates with AMPA receptors (ionotropic glutamate receptors) in synaptic spines and promotes AMPA receptor desensitization at excitatory synapses. The chain is Protein shisa-9B (shisa9b) from Danio rerio (Zebrafish).